The chain runs to 281 residues: Alcohol dehydrogenase-related 31 kDa protein (281 aa).

Residue 11–34 participates in NAD(+) binding; sequence YVADCGGIALETSKVLMTKNIAKL. Residue serine 139 coordinates substrate. Residue tyrosine 152 is the Proton acceptor of the active site.

The protein belongs to the short-chain dehydrogenases/reductases (SDR) family.

The protein is Alcohol dehydrogenase-related 31 kDa protein (Adhr) of Drosophila ambigua (Fruit fly).